A 284-amino-acid polypeptide reads, in one-letter code: Efem/EfeO family lipoprotein (284 aa).

The signal sequence occupies residues 1-17 (MKKLTTLLLASTLLIAA). C18 carries N-palmitoyl cysteine lipidation. C18 carries S-diacylglycerol cysteine lipidation.

The protein belongs to the EfeM/EfeO family.

It is found in the cell membrane. The sequence is that of Efem/EfeO family lipoprotein from Staphylococcus aureus (strain USA300).